A 148-amino-acid polypeptide reads, in one-letter code: Small ribosomal subunit protein eS6 (148 aa).

It belongs to the eukaryotic ribosomal protein eS6 family.

This is Small ribosomal subunit protein eS6 from Pyrobaculum neutrophilum (strain DSM 2338 / JCM 9278 / NBRC 100436 / V24Sta) (Thermoproteus neutrophilus).